The following is an 84-amino-acid chain: Large ribosomal subunit protein bL27 (84 aa).

Residues 1–22 (MAHKKGASSTRNGRDSNAQRLG) form a disordered region. Positions 7-19 (ASSTRNGRDSNAQ) are enriched in polar residues.

The protein belongs to the bacterial ribosomal protein bL27 family.

This Streptomyces coelicolor (strain ATCC BAA-471 / A3(2) / M145) protein is Large ribosomal subunit protein bL27.